The sequence spans 986 residues: Probable ATP-dependent RNA helicase ddx42 (986 aa).

Disordered regions lie at residues 1-149, 165-192, and 206-252; these read MSKR…DEDD, AAID…DIDN, and QLAN…IEPL. A compositionally biased stretch (low complexity) spans 29 to 82; sequence SNINNNNNSNNNNNNNNNNNNNNNNNNNKNNIGTGINLNIKNNNNINNNNNKSG. Over residues 105–117 the composition is skewed to polar residues; that stretch reads PPKSSMTTLNKSP. A compositionally biased stretch (low complexity) spans 119 to 137; that stretch reads NFENASSNNNNNNNNNNQE. Acidic residues predominate over residues 217–236; it reads DDDVDYSSLDDDDGYFDDEE. A Q motif motif is present at residues 305-333; that stretch reads TSFGHYGFDDILLQAIAKQSIETPTPIQK. Positions 336–511 constitute a Helicase ATP-binding domain; that stretch reads IPIALSGRDL…RTILSDPIKI (176 aa). 349-356 lines the ATP pocket; the sequence is AKTGSGKT. The DEAD box signature appears at 459 to 462; that stretch reads DEAD. A Helicase C-terminal domain is found at 522–684; the sequence is DITQIVQVLK…FVPPELIDVA (163 aa). The interval 688 to 986 is disordered; it reads PHFKRERGGG…FNQRSQYNRR (299 aa). The segment covering 696–723 has biased composition (gly residues); that stretch reads GGGGGSNRGRGRGGGGVGYRRNSRGGGV. 2 stretches are compositionally biased toward low complexity: residues 753–764 and 771–978; these read NPNNTDNSEINN and NNEN…NNFN.

This sequence belongs to the DEAD box helicase family. DDX42 subfamily.

The protein resides in the nucleus. The catalysed reaction is ATP + H2O = ADP + phosphate + H(+). In terms of biological role, probable ATP-dependent RNA helicase which may bind to partially double-stranded RNAs (dsRNAs) in order to unwind RNA secondary structures. This is Probable ATP-dependent RNA helicase ddx42 (ddx42) from Dictyostelium discoideum (Social amoeba).